We begin with the raw amino-acid sequence, 450 residues long: MIERNGLQRMPFRLNRRHMISGMASAAVLLGSRQALGQARVQITEGNVAPLPIAIPNFVGGTPSDNEVGAGVAKVITNNLKRSGLFAPIDQAAYIEKITNIDVPPQFANWKTINAQALVTGRMTRQGDGRLKAEFRLWDVATGQQLAGQQYFTSPEYWRRIAHIISDQIYERLTGEKGYFDSRVVFVDESGSSQRRVKRLALMDQDGANVRYLTRGADLVITPRFSPSTQEVTYMEFGQGDPRVYLFNIETGQREIVGNFPGMSFSPRFAPDGQRIIMSLQQGGNSNLFVMDLRSKSTTRLTDTPAIDTSPSYSPDGARICFESDRGGKPQIYVMGATGGGAQRISFGEGSYSTPVWSPRGDYIAFTKQGGGQFSIGIIKPDGSGERILTSGFHNEGPTFAPNGRVLMFFRDPGGGGGPSLYTIDVSGRNELKVPTPGFASDPAWSPLLS.

The first 37 residues, M1–G37, serve as a signal peptide directing secretion.

This sequence belongs to the TolB family. The Tol-Pal system is composed of five core proteins: the inner membrane proteins TolA, TolQ and TolR, the periplasmic protein TolB and the outer membrane protein Pal. They form a network linking the inner and outer membranes and the peptidoglycan layer.

It is found in the periplasm. In terms of biological role, part of the Tol-Pal system, which plays a role in outer membrane invagination during cell division and is important for maintaining outer membrane integrity. This chain is Tol-Pal system protein TolB, found in Nitrobacter winogradskyi (strain ATCC 25391 / DSM 10237 / CIP 104748 / NCIMB 11846 / Nb-255).